Here is an 86-residue protein sequence, read N- to C-terminus: uncharacterized protein (86 aa).

In terms of tissue distribution, retina-specific.

This is an uncharacterized protein from Homo sapiens (Human).